The chain runs to 382 residues: Ribosomal RNA large subunit methyltransferase F (382 aa).

2 disordered regions span residues 1–53 (MTKP…LHRD) and 269–288 (NRASKGHKLEPKAPKDKSQL). Over residues 8–24 (ASRKPVTKSGRNSKRSR) the composition is skewed to basic residues. Over residues 269–286 (NRASKGHKLEPKAPKDKS) the composition is skewed to basic and acidic residues.

Belongs to the methyltransferase superfamily. METTL16/RlmF family.

It localises to the cytoplasm. The catalysed reaction is adenosine(1618) in 23S rRNA + S-adenosyl-L-methionine = N(6)-methyladenosine(1618) in 23S rRNA + S-adenosyl-L-homocysteine + H(+). Specifically methylates the adenine in position 1618 of 23S rRNA. The chain is Ribosomal RNA large subunit methyltransferase F from Shewanella woodyi (strain ATCC 51908 / MS32).